The primary structure comprises 367 residues: Peptide chain release factor 2 (367 aa).

Gln-254 carries the post-translational modification N5-methylglutamine.

The protein belongs to the prokaryotic/mitochondrial release factor family. In terms of processing, methylated by PrmC. Methylation increases the termination efficiency of RF2.

The protein localises to the cytoplasm. Functionally, peptide chain release factor 2 directs the termination of translation in response to the peptide chain termination codons UGA and UAA. The chain is Peptide chain release factor 2 from Neisseria meningitidis serogroup A / serotype 4A (strain DSM 15465 / Z2491).